Consider the following 721-residue polypeptide: Ribonucleoside-diphosphate reductase subunit alpha (721 aa).

Substrate-binding positions include Thr168, Ser184 to Cys185, Gly213, Asn393 to Glu397, and Pro595 to Ile599. Cys185 and Cys422 are oxidised to a cystine. The active-site Proton acceptor is the Asn393. Cys395 functions as the Cysteine radical intermediate in the catalytic mechanism. Glu397 functions as the Proton acceptor in the catalytic mechanism.

The protein belongs to the ribonucleoside diphosphate reductase large chain family. As to quaternary structure, tetramer of two alpha and two beta subunits.

The enzyme catalyses a 2'-deoxyribonucleoside 5'-diphosphate + [thioredoxin]-disulfide + H2O = a ribonucleoside 5'-diphosphate + [thioredoxin]-dithiol. Its activity is regulated as follows. Under complex allosteric control mediated by deoxynucleoside triphosphates and ATP binding. The type of nucleotide bound at the specificity site determines substrate preference. It seems probable that ATP makes the enzyme reduce CDP and UDP, dGTP favors ADP reduction and dTTP favors GDP reduction. In terms of biological role, provides the precursors necessary for DNA synthesis. Catalyzes the biosynthesis of deoxyribonucleotides from the corresponding ribonucleotides. This is Ribonucleoside-diphosphate reductase subunit alpha (nrdE) from Mycobacterium leprae (strain TN).